The sequence spans 427 residues: MHYFGVLAALSVFNIIACLTRGKPLENWKKLPVMEESDAFFHDPGEVEHDTHFDFKSFLENMKTDLLRSLNLSRVPSQVKTKEEPPQFMIDLYNRYTADKSSIPASNIVRSFSTEDVVSLISPEEHSFQKHILLFNISIPRYEEVTRAELRIFISCHKEVGSPSRLEGNMVIYDVLDGDHWENKESTKSLLVSHSIQDCGWEMFEVSSAVKRWVKADKMKTKNKLEVVIESKDLSGFPCGKLDITVTHDTKNLPLLIVFSNDRSNGTKETKVELREMIVHEQESVLNKLGKNDSSSEEEQREEKAIARPRQHSSRSKRSIGANHCRRTSLHVNFKEIGWDSWIIAPKDYEAFECKGGCFFPLTDNVTPTKHAIVQTLVHLQNPKKASKACCVPTKLDAISILYKDDAGVPTLIYNYEGMKVAECGCR.

Residues 1-20 (MHYFGVLAALSVFNIIACLT) form the signal peptide. Positions 21 to 318 (RGKPLENWKK…PRQHSSRSKR (298 aa)) are excised as a propeptide. Asn-71, Asn-136, Asn-265, and Asn-292 each carry an N-linked (GlcNAc...) asparagine glycan. The segment at 288-321 (KLGKNDSSSEEEQREEKAIARPRQHSSRSKRSIG) is disordered. Positions 307-321 (ARPRQHSSRSKRSIG) are enriched in basic residues. 3 disulfides stabilise this stretch: Cys-325–Cys-391, Cys-354–Cys-424, and Cys-358–Cys-426.

The protein belongs to the TGF-beta family. As to quaternary structure, homodimer; disulfide-linked. Expressed selectively in the dorsal neural tube. Lower levels seen in kidney and myotomal cells.

Its subcellular location is the secreted. Its function is as follows. Appears to regulate cell differentiation within the neural tube. May regulate the differentiation of cell types along the dorsoventral axis of the neural tube, acting in conjunction with distinct ventralizing signals from the notochord and floor plate. Controls the cell differentiation in the neural tube in several ways: (1) promotes the differentiation of cell types that derive from the dorsal neural tube. (2) ensures that the dorsal neural tube is refractory to ventralizing species from the notochord. (3) can diffuse and influence the fate of cells in more ventral regions of the neural tube. This Gallus gallus (Chicken) protein is Dorsalin-1 (DSL1).